The primary structure comprises 178 residues: Large ribosomal subunit protein uL6 (178 aa).

This sequence belongs to the universal ribosomal protein uL6 family. Part of the 50S ribosomal subunit.

Functionally, this protein binds to the 23S rRNA, and is important in its secondary structure. It is located near the subunit interface in the base of the L7/L12 stalk, and near the tRNA binding site of the peptidyltransferase center. This chain is Large ribosomal subunit protein uL6, found in Halobacterium salinarum (strain ATCC 700922 / JCM 11081 / NRC-1) (Halobacterium halobium).